The chain runs to 273 residues: 4-hydroxy-tetrahydrodipicolinate reductase (273 aa).

NAD(+)-binding positions include 8–13, Glu-34, 102–104, and 128–131; these read GACGRM, GTT, and APNM. His-160 serves as the catalytic Proton donor/acceptor. Position 161 (His-161) interacts with (S)-2,3,4,5-tetrahydrodipicolinate. Lys-164 functions as the Proton donor in the catalytic mechanism. 170–171 provides a ligand contact to (S)-2,3,4,5-tetrahydrodipicolinate; the sequence is GT.

Belongs to the DapB family.

The protein resides in the cytoplasm. It carries out the reaction (S)-2,3,4,5-tetrahydrodipicolinate + NAD(+) + H2O = (2S,4S)-4-hydroxy-2,3,4,5-tetrahydrodipicolinate + NADH + H(+). The enzyme catalyses (S)-2,3,4,5-tetrahydrodipicolinate + NADP(+) + H2O = (2S,4S)-4-hydroxy-2,3,4,5-tetrahydrodipicolinate + NADPH + H(+). It functions in the pathway amino-acid biosynthesis; L-lysine biosynthesis via DAP pathway; (S)-tetrahydrodipicolinate from L-aspartate: step 4/4. Catalyzes the conversion of 4-hydroxy-tetrahydrodipicolinate (HTPA) to tetrahydrodipicolinate. This is 4-hydroxy-tetrahydrodipicolinate reductase from Methanothermobacter thermautotrophicus (strain ATCC 29096 / DSM 1053 / JCM 10044 / NBRC 100330 / Delta H) (Methanobacterium thermoautotrophicum).